A 509-amino-acid polypeptide reads, in one-letter code: Putative ATP-dependent RNA helicase QP509L (509 aa).

Positions 110 to 262 (KKLLSPYGRF…KIILHHLGQP (153 aa)) constitute a Helicase ATP-binding domain. 123-130 (LNTGLGKT) serves as a coordination point for ATP. A DEAH box motif is present at residues 215 to 218 (DEAH).

This sequence belongs to the DEAD box helicase family. DEAH subfamily.

It carries out the reaction ATP + H2O = ADP + phosphate + H(+). This is Putative ATP-dependent RNA helicase QP509L from Ornithodoros (relapsing fever ticks).